Reading from the N-terminus, the 455-residue chain is Periplasmic pH-dependent serine endoprotease DegQ (455 aa).

Positions 1 to 27 (MKKQTQLLSALALSVGLTLSASFQAVA) are cleaved as a signal peptide. Substrate-binding positions include glutamate 59, histidine 109, aspartate 139, glycine 212, 212 to 214 (GNS), 230 to 234 (TAILA), and 269 to 273 (LGIKG). Active-site charge relay system residues include histidine 109 and aspartate 139. The Charge relay system role is filled by serine 214. PDZ domains lie at 258–349 (LIDF…LRNG) and 355–447 (EVTL…VRGN).

It belongs to the peptidase S1C family. As to quaternary structure, degQ can reversibly switch between different oligomeric forms that represent inactive (6-mer) and active (12- and 24-mer) protease states. Substrate binding triggers the conversion of the resting DegQ trimer and hexamer into catalytically active 12- and 24-mers. The conversion of 6-mer (DegQ6) into 12-mer (DegQ12) or 24-mer (DegQ24) is crucial in regulating protease activity.

It localises to the periplasm. The enzyme catalyses Acts on substrates that are at least partially unfolded. The cleavage site P1 residue is normally between a pair of hydrophobic residues, such as Val-|-Val.. Its activity is regulated as follows. Inhibited by diisopropylfluorophosphate (DFP). DegQ could degrade transiently denatured and unfolded proteins which accumulate in the periplasm following stress conditions. DegQ is efficient with Val-Xaa and Ile-Xaa peptide bonds, suggesting a preference for a beta-branched side chain amino acids. Only unfolded proteins devoid of disulfide bonds appear capable to be cleaved, thereby preventing non-specific proteolysis of folded proteins. DegQ can substitute for the periplasmic protease DegP. This is Periplasmic pH-dependent serine endoprotease DegQ (degQ) from Escherichia coli (strain K12).